A 295-amino-acid chain; its full sequence is Ubiquitin-conjugating enzyme E2-34 kDa (295 aa).

The UBC core domain maps to T7 to Q169. The active-site Glycyl thioester intermediate is the C95. A disordered region spans residues I185 to I295. S186 is subject to Phosphoserine. The span at K189 to A200 shows a compositional bias: basic and acidic residues. Acidic residues-rich tracts occupy residues S207–D226 and E234–D265. Residues V269–E279 show a composition bias toward basic and acidic residues. S282 and S292 each carry phosphoserine.

The protein belongs to the ubiquitin-conjugating enzyme family. In terms of assembly, interacts with CDC53. Component of the E3 ubiquitin ligase complexes SCF with CDC53, SKP1/CBF3D, HRT1 and some F-box proteins like MET30 and CDC4.

The protein resides in the cytoplasm. Its subcellular location is the nucleus. The enzyme catalyses S-ubiquitinyl-[E1 ubiquitin-activating enzyme]-L-cysteine + [E2 ubiquitin-conjugating enzyme]-L-cysteine = [E1 ubiquitin-activating enzyme]-L-cysteine + S-ubiquitinyl-[E2 ubiquitin-conjugating enzyme]-L-cysteine.. The protein operates within protein modification; protein ubiquitination. Functionally, catalyzes the covalent attachment of ubiquitin to other proteins. Capable, in vitro, to ubiquitinate histone H2A. Mediates the initiation of DNA replication (transition of G1 to S phase in cell cycle). Essential component of the E3 ubiquitin ligase complex SCF (SKP1-CUL1-F-box protein), which mediates the ubiquitination and subsequent proteasomal degradation of target proteins. Involved in the regulation of methionine biosynthesis genes and in the degradation of CDC6 together with CDC4 and CDC53. The sequence is that of Ubiquitin-conjugating enzyme E2-34 kDa (CDC34) from Saccharomyces cerevisiae (strain ATCC 204508 / S288c) (Baker's yeast).